The following is an 886-amino-acid chain: DNA mismatch repair protein MutS (886 aa).

Residue 626–633 coordinates ATP; that stretch reads GPNMGGKS.

The protein belongs to the DNA mismatch repair MutS family.

This protein is involved in the repair of mismatches in DNA. It is possible that it carries out the mismatch recognition step. This protein has a weak ATPase activity. This Burkholderia ambifaria (strain ATCC BAA-244 / DSM 16087 / CCUG 44356 / LMG 19182 / AMMD) (Burkholderia cepacia (strain AMMD)) protein is DNA mismatch repair protein MutS.